Here is a 257-residue protein sequence, read N- to C-terminus: Thiazole synthase (257 aa).

The active-site Schiff-base intermediate with DXP is the Lys96. Residues Gly157, 184 to 185 (AG), and 206 to 207 (NT) each bind 1-deoxy-D-xylulose 5-phosphate.

It belongs to the ThiG family. Homotetramer. Forms heterodimers with either ThiH or ThiS.

Its subcellular location is the cytoplasm. The enzyme catalyses [ThiS sulfur-carrier protein]-C-terminal-Gly-aminoethanethioate + 2-iminoacetate + 1-deoxy-D-xylulose 5-phosphate = [ThiS sulfur-carrier protein]-C-terminal Gly-Gly + 2-[(2R,5Z)-2-carboxy-4-methylthiazol-5(2H)-ylidene]ethyl phosphate + 2 H2O + H(+). It functions in the pathway cofactor biosynthesis; thiamine diphosphate biosynthesis. Functionally, catalyzes the rearrangement of 1-deoxy-D-xylulose 5-phosphate (DXP) to produce the thiazole phosphate moiety of thiamine. Sulfur is provided by the thiocarboxylate moiety of the carrier protein ThiS. In vitro, sulfur can be provided by H(2)S. This is Thiazole synthase from Bartonella bacilliformis (strain ATCC 35685 / KC583 / Herrer 020/F12,63).